We begin with the raw amino-acid sequence, 593 residues long: High affinity cGMP-specific 3',5'-cyclic phosphodiesterase 9A (593 aa).

The disordered stretch occupies residues 87–142 (SAGVEDKRTTSRGQSAERPLRDRRVVGLEQPRREGAFESGQVEPRPREPQGCCQEG). Residues 104-122 (RPLRDRRVVGLEQPRREGA) are compositionally biased toward basic and acidic residues. Positions 236 to 557 (PRRDVPTYPK…DRYEELKRID (322 aa)) constitute a PDEase domain. Residue His-312 is the Proton donor of the active site. Residue 312–316 (HNFRH) coordinates 3',5'-cyclic GMP. The Zn(2+) site is built by His-316, His-352, and Asp-353. Residue Asp-353 participates in 3',5'-cyclic GMP binding. Position 353 (Asp-353) interacts with Mg(2+). Ser-379 bears the Phosphoserine mark. 3',5'-cyclic GMP-binding positions include Asp-462, Tyr-484, and 512–513 (AQ). A Zn(2+)-binding site is contributed by Asp-462. A disordered region spans residues 564–593 (QKKTDSLTSGATEKSRERSRDVKNSEGDCA). Positions 576-593 (EKSRERSRDVKNSEGDCA) are enriched in basic and acidic residues.

This sequence belongs to the cyclic nucleotide phosphodiesterase family. PDE9 subfamily. As to quaternary structure, homodimer. It depends on Zn(2+) as a cofactor. Requires Mg(2+) as cofactor.

It localises to the cell projection. It is found in the ruffle membrane. The protein localises to the cytoplasm. Its subcellular location is the perinuclear region. The protein resides in the golgi apparatus. It localises to the endoplasmic reticulum. It is found in the cell membrane. The protein localises to the sarcolemma. The catalysed reaction is 3',5'-cyclic GMP + H2O = GMP + H(+). Its pathway is purine metabolism; 3',5'-cyclic GMP degradation; GMP from 3',5'-cyclic GMP: step 1/1. With respect to regulation, specifically inhibited by a compound named 3r ((R)-2-((1-cyclopentyl-4-hydroxy-1H-pyrazolo[3,4-d]pyrimidin-6- yl)amino)-N-(4-methoxyphenyl)propanamide); the inhibitor forms a hydrogen bond with Tyr-484, Ala-512 and Gln-513. Specifically hydrolyzes the second messenger cGMP, which is a key regulator of many important physiological processes. Highly specific: compared to other members of the cyclic nucleotide phosphodiesterase family, has the highest affinity and selectivity for cGMP. Specifically regulates natriuretic-peptide-dependent cGMP signaling in heart, acting as a regulator of cardiac hypertrophy in myocytes and muscle. Does not regulate nitric oxide-dependent cGMP in heart. Additional experiments are required to confirm whether its ability to hydrolyze natriuretic-peptide-dependent cGMP is specific to heart or is a general feature of the protein. In brain, involved in cognitive function, such as learning and long-term memory. This is High affinity cGMP-specific 3',5'-cyclic phosphodiesterase 9A (PDE9A) from Pan troglodytes (Chimpanzee).